Reading from the N-terminus, the 186-residue chain is MLLYVCLVNLLLQSPSGVDSQVALGVIAKVGVNVAMKLISNIWKGDVVRGWKCAVENKSTKTLYALGTTPVSGHLATVLPDIPPQSTGMFVWSKSRGAARGAIGVVHYQYGNKVLNIMASIPYDWNLYGAWANARVTYQREPFSNLYYGRKGTKYPTRDGNWGKVDGTKFFLTEKSHAKFKVIFSG.

Residues methionine 1–serine 20 form the signal peptide. A Cell attachment site motif is present at residues arginine 158 to glycine 160.

The protein belongs to the actinoporin family. HALT subfamily. As to quaternary structure, octamer or nonamer in membranes. Monomer in the soluble state. In vitro, interacts with folate receptor alpha (of target organism).

The protein resides in the nematocyst. The protein localises to the secreted. It is found in the target cell membrane. In terms of biological role, pore-forming protein that forms hydrophilic pores and causes cytolysis. Compared to equinatoxin-2 (AC P61914), it reveals lower cytolysis activity (5-12-fold difference, tested on erythrocytes), a larger pore size (probably 2-3 nm) and different affinity to membrane lipids (100-fold lower affinity to sphingomyelin). Binds to sulfatides (SFT) as well as to the two sphingolipids, lysophosphatidic acid (LPA) and sphingosine-1-phosphate (S1P). It seems to bind more strongly to LPA than to S1P and SFT. Shows cytolytic activity on HeLa cells, with a different potency than its paralogs (from most potent to less potent: HALT-4&gt;HALT-6~HALT-1&gt;HALT-3&gt;HALT-7&gt;HALT-2). Pore formation is a multi-step process that involves specific recognition of membrane lipid by a protein aromatic residues rich region, firm binding to the membrane (mainly driven by hydrophobic interactions) accompanied by the transfer of the N-terminal region to the lipid-water interface and finally pore formation after oligomerization of monomers. In vitro, binds to the folate receptor alpha (FOLR1), a GPI-anchored membrane protein that plays a major role in the uptake of folate/folic acid into cells via endocytosis, suggesting a possible involvement of this receptor in the mechanism of HALT-1-induced cell lysis. In vivo, does not cause visible paralysis in larvae of the blowfly Sarcophaga faculata, the most common arthropod prey of Hydra. The sequence is that of Hydra actinoporin-like toxin 5 from Hydra vulgaris (Hydra).